Here is a 658-residue protein sequence, read N- to C-terminus: Zinc finger protein 135 (658 aa).

A KRAB domain is found at 14–85 (VTFEDVVVGF…ESRLPQGVYP (72 aa)). Residues 171-196 (LNPDLPHQPMTPERQSPHTWGTRGKR) are disordered. 16 C2H2-type zinc fingers span residues 214-236 (YKCQ…HRTH), 242-264 (YECH…QRIH), 270-292 (YKCT…QRTH), 298-320 (YECS…ERTH), 326-348 (YECS…LRIH), 354-376 (YQCG…QRIH), 382-404 (YECH…QRTH), 410-432 (YECG…RRIH), 438-460 (YGCN…ERTH), 466-488 (YECS…QRIH), 494-516 (YECN…QRIH), 522-544 (YECN…QRIH), 550-572 (YECN…QRIH), 578-600 (YGCN…ERTH), 606-628 (YECH…RRIH), and 634-656 (YACR…QRTH).

Belongs to the krueppel C2H2-type zinc-finger protein family.

Its subcellular location is the nucleus. Functionally, plays a role in the regulation of cell morphology and cytoskeletal organization. May be involved in transcriptional regulation. The polypeptide is Zinc finger protein 135 (ZNF135) (Homo sapiens (Human)).